The following is a 158-amino-acid chain: MQSRLSDWLVKHELVHRSLGFDYQGIETLQIKTEDWDSIAVISYIYGYNYLRSQCAYDVAPGGFLASVYHLTRIQYGIDKVEEVCLKVFVSRNNPRIPSVFWIWKSADFQERESYDMLGISYANHPHLKRILMPESWIGWPLRKDYITPNFYEIQDAR.

The protein belongs to the complex I 30 kDa subunit family. In terms of assembly, NDH is composed of at least 16 different subunits, 5 of which are encoded in the nucleus.

Its subcellular location is the plastid. The protein localises to the chloroplast thylakoid membrane. It carries out the reaction a plastoquinone + NADH + (n+1) H(+)(in) = a plastoquinol + NAD(+) + n H(+)(out). It catalyses the reaction a plastoquinone + NADPH + (n+1) H(+)(in) = a plastoquinol + NADP(+) + n H(+)(out). In terms of biological role, NDH shuttles electrons from NAD(P)H:plastoquinone, via FMN and iron-sulfur (Fe-S) centers, to quinones in the photosynthetic chain and possibly in a chloroplast respiratory chain. The immediate electron acceptor for the enzyme in this species is believed to be plastoquinone. Couples the redox reaction to proton translocation, and thus conserves the redox energy in a proton gradient. The protein is NAD(P)H-quinone oxidoreductase subunit J, chloroplastic of Dioscorea elephantipes (Elephant's foot yam).